The sequence spans 288 residues: Phenazine biosynthesis-like domain-containing protein (288 aa).

E46 is an active-site residue.

Belongs to the PhzF family. Interacts with UNRIP/MAWD.

This chain is Phenazine biosynthesis-like domain-containing protein (Pbld), found in Rattus norvegicus (Rat).